Consider the following 414-residue polypeptide: tRNA N6-adenosine threonylcarbamoyltransferase, mitochondrial (414 aa).

Residues 1–29 (MLMLRRTAGAIPKPPKSKVYGFLRRFSVH) constitute a mitochondrion transit peptide. Residues Lys-74 and Lys-140 each carry the N6-acetyllysine modification. His-147 and His-151 together coordinate a divalent metal cation. Substrate contacts are provided by residues 169–173 (LISGG) and Asp-202. At Lys-203 the chain carries N6-acetyllysine. The substrate site is built by Gly-222 and Glu-226. N6-acetyllysine is present on residues Lys-230 and Lys-299. Substrate-binding positions include 329–330 (SN) and Thr-357. Asp-358 provides a ligand contact to a divalent metal cation.

The protein belongs to the KAE1 / TsaD family. As to quaternary structure, monomer. A divalent metal cation is required as a cofactor.

The protein localises to the mitochondrion. It catalyses the reaction L-threonylcarbamoyladenylate + adenosine(37) in tRNA = N(6)-L-threonylcarbamoyladenosine(37) in tRNA + AMP + H(+). Its function is as follows. Required for the formation of a threonylcarbamoyl group on adenosine at position 37 (t(6)A37) in mitochondrial tRNAs that read codons beginning with adenine. Probably involved in the transfer of the threonylcarbamoyl moiety of threonylcarbamoyl-AMP (TC-AMP) to the N6 group of A37. Involved in mitochondrial genome maintenance. This chain is tRNA N6-adenosine threonylcarbamoyltransferase, mitochondrial, found in Mus musculus (Mouse).